Reading from the N-terminus, the 268-residue chain is Peptide transport system ATP-binding protein SapF (268 aa).

Residues 6–251 (LEVRNLSKTF…PLHELTKRLI (246 aa)) form the ABC transporter domain. An ATP-binding site is contributed by 47–54 (GENGSGKS).

It belongs to the ABC transporter superfamily.

It localises to the cell inner membrane. Its function is as follows. Involved in a peptide intake transport system that plays a role in the resistance to antimicrobial peptides. This is Peptide transport system ATP-binding protein SapF (sapF) from Escherichia coli O6:H1 (strain CFT073 / ATCC 700928 / UPEC).